The sequence spans 121 residues: Ig heavy chain V region MPC 11 (121 aa).

The Ig-like domain occupies 1 to 112 (EAQLQQSGAE…NSSPYFDSWG (112 aa)).

This Mus musculus (Mouse) protein is Ig heavy chain V region MPC 11.